The primary structure comprises 530 residues: Light-harvesting complex I LH38 proteins (530 aa).

The protein localises to the plastid. Its subcellular location is the chloroplast. This Euglena gracilis protein is Light-harvesting complex I LH38 proteins.